Here is a 566-residue protein sequence, read N- to C-terminus: Amino acid transporter 6-1 (566 aa).

Transmembrane regions (helical) follow at residues 65–85, 137–157, 158–178, 187–207, 216–236, 250–270, 334–354, 367–387, 392–412, 423–443, and 455–475; these read YVLL…FYGW, MTFA…DWLG, PLWT…FLAF, YPAL…TLCI, GLII…PLVL, VSIG…LLFM, FFSI…WATS, DVVS…ILLG, VVGI…TYVF, LSAC…YVYV, and LIGI…PLYE. Asn476 carries an N-linked (GlcNAc...) asparagine glycan. Residues 489–509 form a helical membrane-spanning segment; sequence IQIAMTALLCVQYVWIFILGF.

This sequence belongs to the SLC43A transporter (TC 2.A.1.44) family.

Its subcellular location is the cell membrane. It carries out the reaction L-lysine(in) = L-lysine(out). It catalyses the reaction L-arginine(in) = L-arginine(out). The enzyme catalyses L-methionine(in) = L-methionine(out). The catalysed reaction is L-leucine(in) = L-leucine(out). Functionally, cationic and neutral amino acid transporter. Transports lysine with high affinity. Can transport arginine, methionine and leucine. Does not require inorganic ions, such as sodium, chloride, potassium, calcium or magnesium, for transport activity. The chain is Amino acid transporter 6-1 from Toxoplasma gondii (strain ATCC 50611 / Me49).